An 800-amino-acid chain; its full sequence is Phenylalanine--tRNA ligase beta subunit (800 aa).

A tRNA-binding domain is found at 38–147; the sequence is GAELKGVVAA…PGTVPGTPIG (110 aa). Residues 401 to 477 enclose the B5 domain; sequence VASPEVRMRW…RTLGYDAIPE (77 aa). Residues Asp455, Asp461, Glu464, and Glu465 each coordinate Mg(2+). Residues 708–799 form the FDX-ACB domain; that stretch reads PRLPAVLRDV…LRERVGAELR (92 aa).

Belongs to the phenylalanyl-tRNA synthetase beta subunit family. Type 1 subfamily. Tetramer of two alpha and two beta subunits. The cofactor is Mg(2+).

The protein localises to the cytoplasm. It catalyses the reaction tRNA(Phe) + L-phenylalanine + ATP = L-phenylalanyl-tRNA(Phe) + AMP + diphosphate + H(+). The sequence is that of Phenylalanine--tRNA ligase beta subunit from Anaeromyxobacter dehalogenans (strain 2CP-C).